The chain runs to 262 residues: Acyl-[acyl-carrier-protein]--UDP-N-acetylglucosamine O-acyltransferase (262 aa).

The protein belongs to the transferase hexapeptide repeat family. LpxA subfamily. In terms of assembly, homotrimer.

The protein localises to the cytoplasm. It carries out the reaction a (3R)-hydroxyacyl-[ACP] + UDP-N-acetyl-alpha-D-glucosamine = a UDP-3-O-[(3R)-3-hydroxyacyl]-N-acetyl-alpha-D-glucosamine + holo-[ACP]. Its pathway is glycolipid biosynthesis; lipid IV(A) biosynthesis; lipid IV(A) from (3R)-3-hydroxytetradecanoyl-[acyl-carrier-protein] and UDP-N-acetyl-alpha-D-glucosamine: step 1/6. In terms of biological role, involved in the biosynthesis of lipid A, a phosphorylated glycolipid that anchors the lipopolysaccharide to the outer membrane of the cell. In Paraburkholderia phymatum (strain DSM 17167 / CIP 108236 / LMG 21445 / STM815) (Burkholderia phymatum), this protein is Acyl-[acyl-carrier-protein]--UDP-N-acetylglucosamine O-acyltransferase.